Reading from the N-terminus, the 420-residue chain is MERRYLKNPFQDFIGGENTAFASDEEHIKNLICTYVDTILEHCHPNSDDEDDRGDLYVGNAGIAFMFWKLASCEQTRDLYPPALQHASAFIRNAKANAERFKKRSAERYSFLCGNAGIYAVSAAISQAVKDTEELSNDLANFKSGIPSSKEFIHTKNGCDEVLVGRAGYLSGCYWLNDVLPDKKITDDDLISICQLIVTSGREYSKMNNSPLPLMFQYHGTEYLGAAHGLCAILHMLLDSPWFRTVPISAPAAELREIKRSIDYFLVLQDAEGNFPVALEDLRSGRDKRLVHWCHGAPGAVYMLAKAYLIFKEEKYLTSLRRSADLVWKKGFLRKGPGICHGVAGNGYVFLLLFRLTNEMKYLYRAHKFMELLTNSEFKQRARIPDNPHSLYEGVAGTVCFLVDILEPEQAYFPFMDVFH.

It belongs to the LanC-like protein family.

This is LanC-like protein 3 homolog from Drosophila pseudoobscura pseudoobscura (Fruit fly).